A 552-amino-acid polypeptide reads, in one-letter code: MPGPRASLPSLSAVDNVCWRCCSSSSGRPVPGQRLRGFAIANQARPLSTSPVRPLRFGATTTVRAAASQSPRPNGAYFLSNVLLERFGGFQFSPRSRAIAGTSGSNISNTKRNATVAAADIPPSTSTPRPQVDEELPPHRRRQAARRTAEQAASASSNAPSEAAQTTPVTPPPAAPSGEIPPDASSILSNAAAAQPAQSLRRRLTTLLALSKPRLTMLVVLSAMVPYALYPVPDFLTPGVSAPSLSPLTLLFLTTGTTLCSAAANALNMIYEPKTDALMSRTRTRPLVRNLVTTRAAVCFALFCATTGILALQFGVNPTVAFLGAANIVLYAGIYTPLKRVSALNTWVGAVVGGIPPLMGWAAAAGESAVGDGSWRELLLAPDGSSAGGWLFAALLFTWQFPHFMALSWGVRDEYRAAGLRMLAWTNPARNARVALRYGLVFVPLCVGLCAVGVTEWSFAVTSLPVNLWLARESIRFWQTQGAAGSARGLFWASVWHLPVVMVLALLQKKGMWGRVWRSVFGEPDLDDDLASDDGWEYLDESEEPPAVTTRS.

A disordered region spans residues 118–185 (AADIPPSTST…PSGEIPPDAS (68 aa)). Over residues 150-168 (EQAASASSNAPSEAAQTTP) the composition is skewed to low complexity. The next 8 membrane-spanning stretches (helical) occupy residues 215–235 (LTMLVVLSAMVPYALYPVPDF), 245–267 (LSPLTLLFLTTGTTLCSAAANAL), 296–316 (AAVCFALFCATTGILALQFGV), 318–338 (PTVAFLGAANIVLYAGIYTPL), 346–366 (TWVGAVVGGIPPLMGWAAAAG), 387–407 (AGGWLFAALLFTWQFPHFMAL), 441–461 (VFVPLCVGLCAVGVTEWSFAV), and 487–507 (ARGLFWASVWHLPVVMVLALL).

This sequence belongs to the UbiA prenyltransferase family.

The protein localises to the mitochondrion membrane. It carries out the reaction heme b + (2E,6E)-farnesyl diphosphate + H2O = Fe(II)-heme o + diphosphate. In terms of biological role, converts protoheme IX and farnesyl diphosphate to heme O. This is Protoheme IX farnesyltransferase, mitochondrial (COX10) from Pyricularia oryzae (strain 70-15 / ATCC MYA-4617 / FGSC 8958) (Rice blast fungus).